Reading from the N-terminus, the 785-residue chain is MTVLDLSYNFANLSVHDLLEARDTYHYHLLSKANVVGTAIGLYLIRKDEAWPTRKGEGKTPPNKKTYARTLSNSEVRDYSWPCILAFVRSWANEDAFGPAGRYDPAQIVPKTLYLADGRAVPVCVVQADQAGSDTSATYSPPGILPAHKLGGGSPIIVRVQGAEYSATAGCLVSDGHLTYALTARHACGEADTRIFSYLRSGEVEIGASSANQLTRKPFSEVYPDFPGRRSYVALDVGLVRLDQVDDWTSNTYGLPPVGPLGDVHEKNLSLRLIDQPVLGRGATSGLVRGTIKALFYRYRSVGGYDYVGDFLISPAEGLATRHGDSGMVWHLDATTEDDAANPKPLPKRDLRPLAVAWGGQVFEESGVRSAFSIATSLSNVCKLLDVELVTDQSRGVSGYWGRTGHYSIAAFAVALVGDTDLRDFLNRNLGILSFDLDTIAEKGFDKSVGQLGDNFVPLADVPDEIWKKLDHGKNGREGGRDVSAGPHGSDGPEHPNHYADIDGEIGPHKTFRAACLADDSNLTVDAWLQYYETMAAKAKADGDEDGARRHRNKLKQGLLPFRVWQFFDAMVAFVENKDVVGFLTAAGAAAHYMGDASQPLHGSVYSDGDASRTVTRHHPRTGEDEEVSYGSGVHSAFETAMIADKAAQLFPLIKQELSGPGGHALPLLTSGKAMAKATVELMDKVAGILEPMRILDSYEQAGAGTRKATLDGMWKDLGDDTAQVMALGARYLAMLWESAWVHGKGSDIPVRNLTDQNPQDVRARYIQTSFVPSLTLDKIGDELT.

Composition is skewed to basic and acidic residues over residues L470–R481 and D491–D501. 2 disordered regions span residues L470 to D503 and D608 to S629.

This sequence belongs to the peptidase S1 family.

Functionally, probably a dedicated protease for substrate gasdermin bGSDM; cleaves the bGSDM precursor, releasing the pore-forming moiety, which integrates into the membrane and triggers cell death. Involved in defense against bacteriophages. Expression of gasdermin bGSDM and this neighboring protease is toxic in E.coli on solid medium. In Bradyrhizobium tropiciagri, this protein is Probable serine protease Ga0098714_109514.